The following is a 33-amino-acid chain: uncharacterized protein (33 aa).

The tract at residues 1–33 (MGSVIKKRRKRMSKKKHRKLLRRTRVQRRKLGK) is disordered.

This is an uncharacterized protein from Mycobacterium tuberculosis (strain CDC 1551 / Oshkosh).